Reading from the N-terminus, the 426-residue chain is MDLNDLLLQQQEVTNLLSNLQEAHKRILISNEDENNDLNKIRKDILICLNDLKTVNSLIIDPRDGLIKKNLHKLEKYEQELRSLESEEAAIESNLNQWKIDQDPENVRRKENWGTVPINLVGNHQYLLESYVNEVGIENTTLANTNGNHEETPNSSKFTREQLLRNARKLKLCQEQVNSEIDQLKSLISQYERDRNVINDEYNRTTELIQKEVNTLSREEDKINSQREKILKKLGLLKDHEQNQPRNFFFSLGALARVDNSDFKIALSQAYEFIDAKKQALKKILHENKSQTMSLEHNFSIWNDVIRSIQGLETNLQQSFIEKEGNVPKTDITSMISRTLSRVNSIVGTYSKDSIFTSILCELKALQKALDELNGKMQPIPIKSSAKTPELLQMGKSPPKVALSKEYASNLHESTEDFPLKINKTD.

2 coiled-coil regions span residues 64 to 101 (DGLIKKNLHKLEKYEQELRSLESEEAAIESNLNQWKID) and 165 to 230 (RNAR…REKI).

It belongs to the ATG23 family.

The protein resides in the cytoplasm. The protein localises to the membrane. Functionally, required for cytoplasm to vacuole transport (Cvt) vesicle formation and efficient autophagy. Plays a role in ATG protein retrieval from the pre-autophagosomal structure (PAS) and is especially required for autophagy-dependent cycling of ATG9. Also plays a role in regulation of filamentous growth. The protein is Autophagy-related protein 23 (ATG23) of Kluyveromyces lactis (strain ATCC 8585 / CBS 2359 / DSM 70799 / NBRC 1267 / NRRL Y-1140 / WM37) (Yeast).